The following is a 771-amino-acid chain: DNA polymerase 1 (771 aa).

It belongs to the DNA polymerase type-B family.

The catalysed reaction is DNA(n) + a 2'-deoxyribonucleoside 5'-triphosphate = DNA(n+1) + diphosphate. This Pyrococcus abyssi (strain GE5 / Orsay) protein is DNA polymerase 1 (polI).